We begin with the raw amino-acid sequence, 78 residues long: MTHQKHHPDDRSDNVEKLQDMVQNTIENIEESEEQLSFASEAEQEQIREKNERRNESIEAMRNEIHDEAEARKNGYHQ.

The disordered stretch occupies residues 32–78 (SEEQLSFASEAEQEQIREKNERRNESIEAMRNEIHDEAEARKNGYHQ). Over residues 45 to 78 (EQIREKNERRNESIEAMRNEIHDEAEARKNGYHQ) the composition is skewed to basic and acidic residues.

This sequence belongs to the Tlp family.

The protein localises to the spore core. In Bacillus licheniformis (strain ATCC 14580 / DSM 13 / JCM 2505 / CCUG 7422 / NBRC 12200 / NCIMB 9375 / NCTC 10341 / NRRL NRS-1264 / Gibson 46), this protein is Small, acid-soluble spore protein Tlp.